An 812-amino-acid chain; its full sequence is Chromosome alignment-maintaining phosphoprotein 1 (812 aa).

The residue at position 1 (Met-1) is an N-acetylmethionine. A compositionally biased stretch (basic and acidic residues) spans 86–105 (ASPDKWNDKPKNQLNKETDP). 2 disordered regions span residues 86–124 (ASPD…SAEP) and 136–546 (KLGS…PEAR). Phosphoserine is present on residues Ser-87, Ser-108, Ser-173, Ser-184, Ser-204, Ser-214, and Ser-217. Positions 202–213 (VPSPEPQKPAPV) are enriched in pro residues. Positions 220–233 (ATLSNPKPQKQSHF) are enriched in polar residues. 15 positions are modified to phosphoserine: Ser-244, Ser-247, Ser-253, Ser-264, Ser-275, Ser-282, Ser-286, Ser-297, Ser-308, Ser-319, Ser-344, Ser-355, Ser-376, Ser-382, and Ser-386. Residues 271–490 (ARTTSPEPRK…KSSFFIEPQK (220 aa)) form a mediates interaction with MAD2L2 region. Residues 284–297 (SESPEPWKPFPAVS) are compositionally biased toward pro residues. Positions 336–361 (PAKPAPSVSPGPWKPIPSVSPGPWKP) are enriched in pro residues. A compositionally biased stretch (low complexity) spans 363 to 392 (PSVSSASWKSSSVSPSSWKSPPASPESWKS). Residue Thr-403 is modified to Phosphothreonine. Residues Ser-405, Ser-416, Ser-427, Ser-432, Ser-436, Ser-443, Ser-445, and Ser-452 each carry the phosphoserine modification. A mediates localization to the spindle and the kinetochore and is required for the attachment of spindle microtubules to the kinetochore region spans residues 451 to 590 (LSPDQRKTSP…ELQIDAIDDQ (140 aa)). The residue at position 458 (Thr-458) is a Phosphothreonine. Phosphoserine is present on residues Ser-459, Ser-462, Ser-472, and Ser-476. Lys-490 carries the post-translational modification N6-acetyllysine; alternate. Lys-490 participates in a covalent cross-link: Glycyl lysine isopeptide (Lys-Gly) (interchain with G-Cter in SUMO2); alternate. A compositionally biased stretch (low complexity) spans 499 to 512 (PGPSGPSESPKAAS). A phosphoserine mark is found at Ser-507, Ser-512, and Ser-542. A Glycyl lysine isopeptide (Lys-Gly) (interchain with G-Cter in SUMO2) cross-link involves residue Lys-565. Phosphoserine is present on residues Ser-572 and Ser-603. The interval 591–812 (KCDILVQEEL…LEPPLEEQQI (222 aa)) is mediates localization to the chromosome and the spindle and negatively regulates chromosome alignment. Residue Lys-606 forms a Glycyl lysine isopeptide (Lys-Gly) (interchain with G-Cter in SUMO2) linkage. Residues Ser-615, Ser-626, Ser-627, and Ser-632 each carry the phosphoserine modification. A Glycyl lysine isopeptide (Lys-Gly) (interchain with G-Cter in SUMO2) cross-link involves residue Lys-638. Ser-651, Ser-652, and Ser-653 each carry phosphoserine. Lys-670 participates in a covalent cross-link: Glycyl lysine isopeptide (Lys-Gly) (interchain with G-Cter in SUMO2). Position 675 is a phosphoserine (Ser-675). Lys-689 participates in a covalent cross-link: Glycyl lysine isopeptide (Lys-Gly) (interchain with G-Cter in SUMO2). Phosphoserine is present on Ser-736. The C2H2-type zinc finger occupies 738-760 (YKCTICGKAFLLESLLKNHVAAH).

In terms of assembly, interacts with MAD2L2. Interacts with POGZ, CBX1, CBX3 and CBX5. Post-translationally, phosphorylated by CDK1. Mitotic phosphorylation is required for the attachment of spindle microtubules to the kinetochore.

It is found in the nucleus. The protein resides in the chromosome. Its subcellular location is the centromere. The protein localises to the kinetochore. It localises to the cytoplasm. It is found in the cytoskeleton. The protein resides in the spindle. In terms of biological role, required for proper alignment of chromosomes at metaphase and their accurate segregation during mitosis. Involved in the maintenance of spindle microtubules attachment to the kinetochore during sister chromatid biorientation. May recruit CENPE and CENPF to the kinetochore. The sequence is that of Chromosome alignment-maintaining phosphoprotein 1 (CHAMP1) from Homo sapiens (Human).